Reading from the N-terminus, the 237-residue chain is Phosphoribosylaminoimidazole-succinocarboxamide synthase (237 aa).

It belongs to the SAICAR synthetase family.

The enzyme catalyses 5-amino-1-(5-phospho-D-ribosyl)imidazole-4-carboxylate + L-aspartate + ATP = (2S)-2-[5-amino-1-(5-phospho-beta-D-ribosyl)imidazole-4-carboxamido]succinate + ADP + phosphate + 2 H(+). The protein operates within purine metabolism; IMP biosynthesis via de novo pathway; 5-amino-1-(5-phospho-D-ribosyl)imidazole-4-carboxamide from 5-amino-1-(5-phospho-D-ribosyl)imidazole-4-carboxylate: step 1/2. The chain is Phosphoribosylaminoimidazole-succinocarboxamide synthase from Salmonella agona (strain SL483).